Consider the following 177-residue polypeptide: MSEFVTVARPYAKAAFDFAVEHQAVDRWQDMLAFTAQVTRNEQIAELLSGAVAPETMSKTFIAVCGDQLDEPAQNFIRVMAENGRLLVLPEVLLQFIQLRASLESTVDVEVSSASPLNDEQLAKIAAAMEKRLSRKVKLNCKIDKSVMAGVVIRAGDMVIDGSVRGRLERLADVLQS.

This sequence belongs to the ATPase delta chain family. F-type ATPases have 2 components, F(1) - the catalytic core - and F(0) - the membrane proton channel. F(1) has five subunits: alpha(3), beta(3), gamma(1), delta(1), epsilon(1). F(0) has three main subunits: a(1), b(2) and c(10-14). The alpha and beta chains form an alternating ring which encloses part of the gamma chain. F(1) is attached to F(0) by a central stalk formed by the gamma and epsilon chains, while a peripheral stalk is formed by the delta and b chains.

Its subcellular location is the cell inner membrane. F(1)F(0) ATP synthase produces ATP from ADP in the presence of a proton or sodium gradient. F-type ATPases consist of two structural domains, F(1) containing the extramembraneous catalytic core and F(0) containing the membrane proton channel, linked together by a central stalk and a peripheral stalk. During catalysis, ATP synthesis in the catalytic domain of F(1) is coupled via a rotary mechanism of the central stalk subunits to proton translocation. Its function is as follows. This protein is part of the stalk that links CF(0) to CF(1). It either transmits conformational changes from CF(0) to CF(1) or is implicated in proton conduction. This is ATP synthase subunit delta from Yersinia enterocolitica serotype O:8 / biotype 1B (strain NCTC 13174 / 8081).